The primary structure comprises 607 residues: UvrABC system protein C (607 aa).

One can recognise a GIY-YIG domain in the interval 16–94 (GRPGVYRMFD…IKEWRPPYNI (79 aa)). Residues 203-238 (NALTDELSAGMEQAASTLDFEKAAELRDQISLLRRV) form the UVR domain.

The protein belongs to the UvrC family. As to quaternary structure, interacts with UvrB in an incision complex.

It localises to the cytoplasm. The UvrABC repair system catalyzes the recognition and processing of DNA lesions. UvrC both incises the 5' and 3' sides of the lesion. The N-terminal half is responsible for the 3' incision and the C-terminal half is responsible for the 5' incision. In Pseudomonas protegens (strain DSM 19095 / LMG 27888 / CFBP 6595 / CHA0), this protein is UvrABC system protein C.